Reading from the N-terminus, the 275-residue chain is Intercellular adhesion molecule 2 (275 aa).

Residues 1 to 24 form the signal peptide; sequence MSSFGYRTLTVALFALICCPGSDE. The Extracellular portion of the chain corresponds to 25-223; that stretch reads KVFEVHVRPK…EIYEPVSDSQ (199 aa). Residues 41-98 enclose the Ig-like C2-type 1 domain; sequence KASLEVNCSTTCNQPEVGGLETSLDKILLDEQAQWKHYLVSNISHDTVLQCHFTCSGK. Residues asparagine 47, asparagine 82, asparagine 105, asparagine 153, asparagine 158, asparagine 176, and asparagine 187 are each glycosylated (N-linked (GlcNAc...) asparagine). Disulfide bonds link cysteine 48–cysteine 91 and cysteine 52–cysteine 95. Residues 127–197 enclose the Ig-like C2-type 2 domain; that stretch reads GKSFTIECRV…FSCLAVLDLI (71 aa). An intrachain disulfide couples cysteine 134 to cysteine 190. Residues 224–248 form a helical membrane-spanning segment; it reads MVIIVTVVSVLLSLFVTSVLLCFIF. Topologically, residues 249 to 275 are cytoplasmic; the sequence is GQHLRQQRMGTYGVRAAWRRLPQAFRP. The tract at residues 251–275 is required for interaction with EZR, MSN and RDX and co-localization to microvilli; the sequence is HLRQQRMGTYGVRAAWRRLPQAFRP.

The protein belongs to the immunoglobulin superfamily. ICAM family. In terms of assembly, interacts with RDX, EZR and MSN.

It is found in the membrane. It localises to the cell projection. The protein localises to the microvillus. In terms of biological role, ICAM proteins are ligands for the leukocyte adhesion protein LFA-1 (integrin alpha-L/beta-2). ICAM2 may play a role in lymphocyte recirculation by blocking LFA-1-dependent cell adhesion. It mediates adhesive interactions important for antigen-specific immune response, NK-cell mediated clearance, lymphocyte recirculation, and other cellular interactions important for immune response and surveillance. The protein is Intercellular adhesion molecule 2 (ICAM2) of Gorilla gorilla gorilla (Western lowland gorilla).